The following is a 342-amino-acid chain: Polycomb group RING finger protein 2 (342 aa).

An RING-type zinc finger spans residues 18-57; sequence CALCGGYFIDATTIVECLHSFCKTCIVRYLETNKYCPMCD. Glycyl lysine isopeptide (Lys-Gly) (interchain with G-Cter in SUMO2) cross-links involve residues Lys51 and Lys88. Positions 81-95 match the Nuclear localization signal motif; it reads KLVPGLFKDEMKRRR. Residue Thr237 is modified to Phosphothreonine; by PKA. Residues 237 to 342 are disordered; that stretch reads TLPTVPTPSE…MTVNGAPCPP (106 aa). Positions 243–253 are enriched in polar residues; it reads TPSEGTNTSGA. Residues 263–318 are compositionally biased toward low complexity; the sequence is APSPATLPATSSSLPSPATPSHGSPSSHGPPATHPTSPTPPSTAAGTTTATNGGTS. A compositionally biased stretch (polar residues) spans 319 to 328; that stretch reads NCLQTPSSTS. At Thr334 the chain carries Phosphothreonine; by PKA.

In terms of assembly, exists as both a monomer and homodimer. Component of a PRC1-like complex. Interacts with CBX8, RING1 and RNF2. Interacts with CBX7. Interacts with PHC2. In terms of processing, phosphorylated. Homodimer formation is regulated by phosphorylation with only unphosphorylated proteins forming homodimers. In terms of tissue distribution, expressed in embryonic stem cells. Expressed in a variety of tumor cells and in neural tissues.

The protein resides in the nucleus. Its function is as follows. Transcriptional repressor. Binds specifically to the DNA sequence 5'-GACTNGACT-3'. Has tumor suppressor activity. May play a role in control of cell proliferation and/or neural cell development. Regulates proliferation of early T progenitor cells by maintaining expression of HES1. Also plays a role in antero-posterior specification of the axial skeleton and negative regulation of the self-renewal activity of hematopoietic stem cells. Component of a Polycomb group (PcG) multiprotein PRC1-like complex, a complex class required to maintain the transcriptionally repressive state of many genes, including Hox genes, throughout development. PcG PRC1 complex acts via chromatin remodeling and modification of histones; it mediates monoubiquitination of histone H2A 'Lys-119', rendering chromatin heritably changed in its expressibility. Within the PRC1-like complex, regulates RNF2 ubiquitin ligase activity. The sequence is that of Polycomb group RING finger protein 2 (Pcgf2) from Mus musculus (Mouse).